Here is a 620-residue protein sequence, read N- to C-terminus: MKRDVRILLLGEAQVGKTSLILSLVGEEFPEEVPPRAEEITIPADVTPEKVPTHIVDYSEAEQTAEELQDEIQKASVVCVVYDVSEETTVEKIRTKWIPLVNGGTRRGPRVPIILVGNKSDLRPGGSMEAVLPIMSQFPEIETCVECSAKNLKNISELFYYAQKAVLHPTAPLYDPEAKQLRPACAQALTRIFRLSDQDMDQALSDQELNAFQTCCFGHPLAPQALEDVKLVVSRNVAGGVQDDRLTLDGFLFLNTLFIQRGRHETTWTILRRFGYSDSLELTPDYLFPALHVPPGCSAELNHHGYQFAQRMLEKHDQDRDGALSPAELESLFSVFPGPPWGPQLPRHRPHRGRSAAPARVPLPVDPGDLLGRPALSRAPWLPGLPHPLRAGLAGARHHSHQGEEAGPGKGQTQRNVLLCKVLGARGVGKSSFLRAFLGRGLGDARGPPEEPSVYAIDTVRVGGQEKYLILCEVAADSLLTAEADASCDVACLMFDSSDPGSFALCASVYKRHYMDGQIPCLFISSKADLPEGLSPPGLSPSEFCRRHRLPAPTLFSCAGPAEPSTAVFARLATMATFPHLVHGELHTTSFWLRVALGAVGAAVAAILSFSLYRVLVKSR.

The Cytoplasmic segment spans residues 1-594; sequence MKRDVRILLL…ELHTTSFWLR (594 aa). Residues 2–168 enclose the Miro 1 domain; it reads KRDVRILLLG…FYYAQKAVLH (167 aa). Positions 16, 17, 18, and 19 each coordinate GTP. Thr18 is a binding site for Mg(2+). The Mg(2+) site is built by Pro35 and Asp57. Ser59 is a binding site for GTP. A Glycyl lysine isopeptide (Lys-Gly) (interchain with G-Cter in ubiquitin) cross-link involves residue Lys96. 5 residues coordinate GTP: Asn118, Lys119, Asp121, Ala149, and Lys150. Lys119 is covalently cross-linked (Glycyl lysine isopeptide (Lys-Gly) (interchain with G-Cter in ubiquitin)). Lys164 participates in a covalent cross-link: Glycyl lysine isopeptide (Lys-Gly) (interchain with G-Cter in ubiquitin). 2 consecutive EF-hand domains span residues 184–219 and 304–339; these read ACAQALTRIFRLSDQDMDQALSDQELNAFQTCCFGH and HGYQFAQRMLEKHDQDRDGALSPAELESLFSVFPGP. Ca(2+) is bound by residues Asp197, Asp199, Asp201, Glu208, Asp317, Asp319, Asp321, and Glu328. The disordered stretch occupies residues 340-364; it reads PWGPQLPRHRPHRGRSAAPARVPLP. Positions 415–578 constitute a Miro 2 domain; sequence RNVLLCKVLG…FARLATMATF (164 aa). GTP is bound by residues Gly427, Gly429, Lys430, and Ser431. 2 residues coordinate Mg(2+): Ser431 and Glu473. GTP is bound by residues Lys527, Asp529, and Cys558. Residues 595-617 traverse the membrane as a helical; Anchor for type IV membrane protein segment; sequence VALGAVGAAVAAILSFSLYRVLV. Residues 618-620 are Mitochondrial intermembrane-facing; sequence KSR.

Belongs to the mitochondrial Rho GTPase family. In terms of assembly, homodimer. Interacts with the kinesin-binding proteins TRAK1/OIP106 and TRAK2/GRIF1, forming a link between mitochondria and the trafficking apparatus of the microtubules. Interacts with ARMCX3. Found in a complex with KIF5B, OGT, RHOT1 and TRAK1. Ubiquitinated by PRKN in a PINK1-dependent manner, leading to its degradation.

The protein resides in the mitochondrion outer membrane. It catalyses the reaction GTP + H2O = GDP + phosphate + H(+). It carries out the reaction ATP + H2O = ADP + phosphate + H(+). The enzyme catalyses UTP + H2O = UDP + phosphate + H(+). In terms of biological role, atypical mitochondrial nucleoside-triphosphatase (NTPase) involved in mitochondrial trafficking. Probably involved in control of anterograde transport of mitochondria and their subcellular distribution. Can hydrolyze GTP, ATP and UTP. This Sus scrofa (Pig) protein is Mitochondrial Rho GTPase 2 (RHOT2).